A 323-amino-acid chain; its full sequence is Methenyltetrahydromethanopterin cyclohydrolase (323 aa).

This sequence belongs to the MCH family.

The protein resides in the cytoplasm. It catalyses the reaction 5,10-methenyl-5,6,7,8-tetrahydromethanopterin + H2O = N(5)-formyl-5,6,7,8-tetrahydromethanopterin + H(+). It participates in one-carbon metabolism; methanogenesis from CO(2); 5,10-methenyl-5,6,7,8-tetrahydromethanopterin from CO(2): step 3/3. In terms of biological role, catalyzes the reversible interconversion of 5-formyl-H(4)MPT to methenyl-H(4)MPT(+). The protein is Methenyltetrahydromethanopterin cyclohydrolase of Methanococcus maripaludis (strain C7 / ATCC BAA-1331).